The sequence spans 454 residues: tRNA modification GTPase MnmE (454 aa).

Arg-23, Glu-80, and Lys-120 together coordinate (6S)-5-formyl-5,6,7,8-tetrahydrofolate. Residues 216–377 (GMKVVIAGRP…LRNHLKQSMG (162 aa)) enclose the TrmE-type G domain. Asn-226 lines the K(+) pocket. GTP contacts are provided by residues 226–231 (NAGKSS), 245–251 (TDIAGTT), 270–273 (DTAG), 335–338 (NKAD), and 358–360 (SAR). A Mg(2+)-binding site is contributed by Ser-230. Residues Thr-245, Ile-247, and Thr-250 each contribute to the K(+) site. Mg(2+) is bound at residue Thr-251. Residue Lys-454 coordinates (6S)-5-formyl-5,6,7,8-tetrahydrofolate.

It belongs to the TRAFAC class TrmE-Era-EngA-EngB-Septin-like GTPase superfamily. TrmE GTPase family. Homodimer. Heterotetramer of two MnmE and two MnmG subunits. K(+) serves as cofactor.

The protein localises to the cytoplasm. Functionally, exhibits a very high intrinsic GTPase hydrolysis rate. Involved in the addition of a carboxymethylaminomethyl (cmnm) group at the wobble position (U34) of certain tRNAs, forming tRNA-cmnm(5)s(2)U34. The chain is tRNA modification GTPase MnmE from Salmonella paratyphi C (strain RKS4594).